The following is a 245-amino-acid chain: Orotidine 5'-phosphate decarboxylase (245 aa).

Residues D22, K44, 71 to 80 (DLKFHDIPNT), T131, R192, Q201, G221, and R222 each bind substrate. Residue K73 is the Proton donor of the active site.

The protein belongs to the OMP decarboxylase family. Type 1 subfamily. Homodimer.

The enzyme catalyses orotidine 5'-phosphate + H(+) = UMP + CO2. It participates in pyrimidine metabolism; UMP biosynthesis via de novo pathway; UMP from orotate: step 2/2. Its function is as follows. Catalyzes the decarboxylation of orotidine 5'-monophosphate (OMP) to uridine 5'-monophosphate (UMP). This is Orotidine 5'-phosphate decarboxylase from Yersinia pestis bv. Antiqua (strain Antiqua).